The primary structure comprises 329 residues: 7,8-didemethyl-8-hydroxy-5-deazariboflavin synthase (329 aa).

The region spanning 6–244 (ITYTKNVFLP…EEISIQVAPN (239 aa)) is the Radical SAM core domain. [4Fe-4S] cluster is bound by residues Cys-20, Cys-24, and Cys-27.

This sequence belongs to the radical SAM superfamily. CofG family. Consists of two subunits, CofG and CofH. [4Fe-4S] cluster serves as cofactor.

It catalyses the reaction 5-amino-5-(4-hydroxybenzyl)-6-(D-ribitylimino)-5,6-dihydrouracil + S-adenosyl-L-methionine = 7,8-didemethyl-8-hydroxy-5-deazariboflavin + 5'-deoxyadenosine + L-methionine + NH4(+) + H(+). It participates in cofactor biosynthesis; coenzyme F0 biosynthesis. Catalyzes the radical-mediated synthesis of 7,8-didemethyl-8-hydroxy-5-deazariboflavin from 5-amino-5-(4-hydroxybenzyl)-6-(D-ribitylimino)-5,6-dihydrouracil. The polypeptide is 7,8-didemethyl-8-hydroxy-5-deazariboflavin synthase (Methanoregula boonei (strain DSM 21154 / JCM 14090 / 6A8)).